The primary structure comprises 93 residues: Integration host factor subunit beta (93 aa).

This sequence belongs to the bacterial histone-like protein family. Heterodimer of an alpha and a beta chain.

Functionally, this protein is one of the two subunits of integration host factor, a specific DNA-binding protein that functions in genetic recombination as well as in transcriptional and translational control. The sequence is that of Integration host factor subunit beta from Glaesserella parasuis serovar 5 (strain SH0165) (Haemophilus parasuis).